The following is a 230-amino-acid chain: Lipoprotein-releasing system ATP-binding protein LolD (230 aa).

In terms of domain architecture, ABC transporter spans 6 to 230 (LQVQAVSKSY…GYLQVPESAQ (225 aa)). 42–49 (GTSGSGKS) contributes to the ATP binding site.

The protein belongs to the ABC transporter superfamily. Lipoprotein translocase (TC 3.A.1.125) family. As to quaternary structure, the complex is composed of two ATP-binding proteins (LolD) and two transmembrane proteins (LolC and LolE).

It is found in the cell inner membrane. Its function is as follows. Part of the ABC transporter complex LolCDE involved in the translocation of mature outer membrane-directed lipoproteins, from the inner membrane to the periplasmic chaperone, LolA. Responsible for the formation of the LolA-lipoprotein complex in an ATP-dependent manner. This Shewanella oneidensis (strain ATCC 700550 / JCM 31522 / CIP 106686 / LMG 19005 / NCIMB 14063 / MR-1) protein is Lipoprotein-releasing system ATP-binding protein LolD.